A 118-amino-acid polypeptide reads, in one-letter code: Large ribosomal subunit protein uL18 (118 aa).

It belongs to the universal ribosomal protein uL18 family. As to quaternary structure, part of the 50S ribosomal subunit; part of the 5S rRNA/L5/L18/L25 subcomplex. Contacts the 5S and 23S rRNAs.

Its function is as follows. This is one of the proteins that bind and probably mediate the attachment of the 5S RNA into the large ribosomal subunit, where it forms part of the central protuberance. The protein is Large ribosomal subunit protein uL18 of Brachyspira hyodysenteriae (strain ATCC 49526 / WA1).